A 353-amino-acid chain; its full sequence is Probable transport protein YPL264C (353 aa).

Residues Met1–Gly16 are Cytoplasmic-facing. A helical membrane pass occupies residues Leu17 to Leu37. One can recognise an EamA 1 domain in the interval Tyr24–Arg160. At Glu38–Pro51 the chain is on the extracellular side. A helical transmembrane segment spans residues Leu52–Tyr69. Over Met70–Arg94 the chain is Cytoplasmic. A helical membrane pass occupies residues Gly95–Ser115. Position 116 (Asp116) is a topological domain, extracellular. A helical membrane pass occupies residues Ala117–Gly137. At Glu138–Glu144 the chain is on the cytoplasmic side. The chain crosses the membrane as a helical span at residues Ala145–Phe165. Residues Gly166 to Arg188 are Extracellular-facing. The helical transmembrane segment at Leu189–Ile209 threads the bilayer. The EamA 2 domain maps to Cys200 to Asn326. Over Arg210–Ala218 the chain is Cytoplasmic. The chain crosses the membrane as a helical span at residues Ile219–Leu239. The Extracellular segment spans residues Ile240 to Trp254. The chain crosses the membrane as a helical span at residues Gly255–Ile275. The Cytoplasmic portion of the chain corresponds to Gln276 to Arg282. A helical transmembrane segment spans residues Gly283–His303. Position 304 (His304) is a topological domain, extracellular. The chain crosses the membrane as a helical span at residues Trp305–Ile325. At Asn326–Asp353 the chain is on the cytoplasmic side.

The protein resides in the membrane. This chain is Probable transport protein YPL264C, found in Saccharomyces cerevisiae (strain ATCC 204508 / S288c) (Baker's yeast).